The following is a 728-amino-acid chain: Cellulose synthase-like protein E6 (728 aa).

Helical transmembrane passes span 21–43 (AVYR…YRAT) and 53–73 (AAWL…VITQ). Residues aspartate 141 and aspartate 446 contribute to the active site. Transmembrane regions (helical) follow at residues 523–543 (LWAA…LGLV), 546–566 (TPLF…VFCV), 646–666 (PEFV…VAGL), 669–689 (IMAG…LIVI), and 707–727 (IPLP…LLPI).

The protein belongs to the glycosyltransferase 2 family. Plant cellulose synthase-like E subfamily.

It is found in the golgi apparatus membrane. Thought to be a Golgi-localized beta-glycan synthase that polymerize the backbones of noncellulosic polysaccharides (hemicelluloses) of plant cell wall. The polypeptide is Cellulose synthase-like protein E6 (CSLE6) (Oryza sativa subsp. japonica (Rice)).